Here is a 578-residue protein sequence, read N- to C-terminus: A-type ATP synthase subunit A (578 aa).

An ATP-binding site is contributed by 228 to 235 (GPFGSGKT).

This sequence belongs to the ATPase alpha/beta chains family. Has multiple subunits with at least A(3), B(3), C, D, E, F, H, I and proteolipid K(x).

The protein resides in the cell membrane. It catalyses the reaction ATP + H2O + 4 H(+)(in) = ADP + phosphate + 5 H(+)(out). Its function is as follows. Component of the A-type ATP synthase that produces ATP from ADP in the presence of a proton gradient across the membrane. The A chain is the catalytic subunit. This chain is A-type ATP synthase subunit A, found in Methanococcoides burtonii (strain DSM 6242 / NBRC 107633 / OCM 468 / ACE-M).